A 165-amino-acid polypeptide reads, in one-letter code: Thiol peroxidase (165 aa).

Residues 18-164 (RKVGDKAPNF…YEAAIEAAKK (147 aa)) form the Thioredoxin domain. Catalysis depends on C60, which acts as the Cysteine sulfenic acid (-SOH) intermediate. A disulfide bond links C60 and C94.

This sequence belongs to the peroxiredoxin family. Tpx subfamily. Homodimer.

The catalysed reaction is a hydroperoxide + [thioredoxin]-dithiol = an alcohol + [thioredoxin]-disulfide + H2O. Thiol-specific peroxidase that catalyzes the reduction of hydrogen peroxide and organic hydroperoxides to water and alcohols, respectively. Plays a role in cell protection against oxidative stress by detoxifying peroxides. This chain is Thiol peroxidase, found in Listeria monocytogenes serotype 4b (strain F2365).